The primary structure comprises 451 residues: Tubulin gamma-1 chain (451 aa).

A Phosphoserine; by BRSK1 modification is found at serine 131. 142–148 (AGGTGSG) contributes to the GTP binding site.

The protein belongs to the tubulin family. As to quaternary structure, component of the gamma-tubulin ring complex (gTuRC) consisting of TUBGCP2, TUBGCP3, TUBGCP4, TUBGCP5 and TUBGCP6 and gamma-tubulin TUBG1 or TUBG2. TUBGCP2, TUBGCP3, TUBGCP4, TUBGCP5 and TUBGCP6 assemble in a 5:5:2:1:1 stoichiometry; each is associated with a gamma-tubulin, thereby arranging 14 gamma-tubulins in a helical manner. Gamma-tubulin at the first position is blocked by TUBGCP3 at the last position, allowing 13 protafilaments to grow into a microtubule. The gTuRC (via TUBGCP3 and TUBGCP6) interacts with ACTB and MZT1; the interactions form a luminal bridge that stabilizes the initial structure during complex assembly. The gTuRC (via TUBGCP2) interacts with MZT2A/MZT2B and CDK5RAP2 (via CM1 motif); the interactions play a role in gTuRC activation. Interacts with alpha-beta tubulin heterodimers; the interaction allows microtubules to nucleate from the gTuRC. Interacts with B9D2. Interacts with CDK5RAP2; the interaction is leading to centrosomal localization of TUBG1 and CDK5RAP2. Interacts with CIMAP3. Interacts with SAS6 and NUP62 at the centrosome. Interacts with EML3 (phosphorylated at 'Thr-881') and HAUS8. Interacts with DNM2; this interaction may participate in centrosome cohesion. Interacts with CCDC66. Phosphorylation at Ser-131 by BRSK1 regulates centrosome duplication, possibly by mediating relocation of gamma-tubulin and its associated proteins from the cytoplasm to the centrosome.

The protein resides in the cytoplasm. It is found in the cytoskeleton. Its subcellular location is the microtubule organizing center. It localises to the centrosome. The protein localises to the spindle. Tubulin is the major constituent of microtubules, protein filaments consisting of alpha- and beta-tubulin heterodimers. Gamma-tubulin is a key component of the gamma-tubulin ring complex (gTuRC) which mediates microtubule nucleation. The gTuRC regulates the minus-end nucleation of alpha-beta tubulin heterodimers that grow into microtubule protafilaments, a critical step in centrosome duplication and spindle formation. The polypeptide is Tubulin gamma-1 chain (Bos taurus (Bovine)).